The chain runs to 852 residues: Lon protease homolog 2, peroxisomal (852 aa).

Ser2 is subject to N-acetylserine. Residues 13 to 222 (LPLLLTHEGV…MTIPLLVRQI (210 aa)) enclose the Lon N-terminal domain. Residue 375 to 382 (GPPGVGKT) coordinates ATP. The 187-residue stretch at 651–837 (LSQPGVAIGL…DEVLNAAFDG (187 aa)) folds into the Lon proteolytic domain. Residues Ser743 and Lys786 contribute to the active site. A Microbody targeting signal motif is present at residues 850-852 (SKL).

Belongs to the peptidase S16 family. In terms of assembly, interacts with PEX5. Interacts with TYSND1. May interact with enzymes involved in beta-oxidation of fatty acids, including ACOX1/AOX. In terms of tissue distribution, widely expressed, with high levels in the liver, kidney and pancreas.

The protein localises to the peroxisome matrix. The catalysed reaction is Hydrolysis of proteins in presence of ATP.. In terms of biological role, ATP-dependent serine protease that mediates the selective degradation of misfolded and unassembled polypeptides in the peroxisomal matrix. Necessary for type 2 peroxisome targeting signal (PTS2)-containing protein processing and facilitates peroxisome matrix protein import. May indirectly regulate peroxisomal fatty acid beta-oxidation through degradation of the self-processed forms of TYSND1. The sequence is that of Lon protease homolog 2, peroxisomal from Homo sapiens (Human).